The sequence spans 627 residues: Phosphomethylpyrimidine synthase (627 aa).

Polar residues predominate over residues 1–21 (MSAQQQKNLSESAQVDQQSVQ). Residues 1–32 (MSAQQQKNLSESAQVDQQSVQPFPRSQKVYVQ) form a disordered region. Residues Asn-231, Met-260, Tyr-289, His-325, 345 to 347 (SRG), 386 to 389 (DGLR), and Glu-425 contribute to the substrate site. His-429 is a binding site for Zn(2+). A substrate-binding site is contributed by Tyr-452. His-493 provides a ligand contact to Zn(2+). Positions 573, 576, and 581 each coordinate [4Fe-4S] cluster.

Belongs to the ThiC family. As to quaternary structure, homodimer. It depends on [4Fe-4S] cluster as a cofactor.

It catalyses the reaction 5-amino-1-(5-phospho-beta-D-ribosyl)imidazole + S-adenosyl-L-methionine = 4-amino-2-methyl-5-(phosphooxymethyl)pyrimidine + CO + 5'-deoxyadenosine + formate + L-methionine + 3 H(+). It participates in cofactor biosynthesis; thiamine diphosphate biosynthesis. In terms of biological role, catalyzes the synthesis of the hydroxymethylpyrimidine phosphate (HMP-P) moiety of thiamine from aminoimidazole ribotide (AIR) in a radical S-adenosyl-L-methionine (SAM)-dependent reaction. The sequence is that of Phosphomethylpyrimidine synthase from Ectopseudomonas mendocina (strain ymp) (Pseudomonas mendocina).